The sequence spans 419 residues: Ras association domain-containing protein 8 (419 aa).

In terms of domain architecture, Ras-associating spans 1 to 82 (MELKVWVDGV…VQLILRRTGP (82 aa)). Phosphoserine occurs at positions 105 and 129. Threonine 131 is modified (phosphothreonine). A disordered region spans residues 372 to 399 (ASQADIETEAPFQSGSLKRPGSSRQLPS). Positions 382-399 (PFQSGSLKRPGSSRQLPS) are enriched in polar residues. Serine 387 is subject to Phosphoserine.

The sequence is that of Ras association domain-containing protein 8 (Rassf8) from Mus musculus (Mouse).